The chain runs to 406 residues: Bifunctional enzyme IspD/IspF (406 aa).

A 2-C-methyl-D-erythritol 4-phosphate cytidylyltransferase region spans residues 1–247 (MSLIRVNGEA…AFFFNPAKDT (247 aa)). The interval 248 to 406 (FIGMGFDTHA…HVSMRYKQKL (159 aa)) is 2-C-methyl-D-erythritol 2,4-cyclodiphosphate synthase. Positions 254 and 256 each coordinate a divalent metal cation. Residues 254 to 256 (DTH) and 280 to 281 (HS) each bind 4-CDP-2-C-methyl-D-erythritol 2-phosphate. An a divalent metal cation-binding site is contributed by His-288. Residues 302–304 (DIG), 307–311 (FPDND), 378–381 (TTME), Phe-385, and Lys-388 each bind 4-CDP-2-C-methyl-D-erythritol 2-phosphate.

It in the N-terminal section; belongs to the IspD/TarI cytidylyltransferase family. IspD subfamily. This sequence in the C-terminal section; belongs to the IspF family. A divalent metal cation serves as cofactor.

The catalysed reaction is 2-C-methyl-D-erythritol 4-phosphate + CTP + H(+) = 4-CDP-2-C-methyl-D-erythritol + diphosphate. It carries out the reaction 4-CDP-2-C-methyl-D-erythritol 2-phosphate = 2-C-methyl-D-erythritol 2,4-cyclic diphosphate + CMP. Its pathway is isoprenoid biosynthesis; isopentenyl diphosphate biosynthesis via DXP pathway; isopentenyl diphosphate from 1-deoxy-D-xylulose 5-phosphate: step 2/6. It participates in isoprenoid biosynthesis; isopentenyl diphosphate biosynthesis via DXP pathway; isopentenyl diphosphate from 1-deoxy-D-xylulose 5-phosphate: step 4/6. Bifunctional enzyme that catalyzes the formation of 4-diphosphocytidyl-2-C-methyl-D-erythritol from CTP and 2-C-methyl-D-erythritol 4-phosphate (MEP) (IspD), and catalyzes the conversion of 4-diphosphocytidyl-2-C-methyl-D-erythritol 2-phosphate (CDP-ME2P) to 2-C-methyl-D-erythritol 2,4-cyclodiphosphate (ME-CPP) with a corresponding release of cytidine 5-monophosphate (CMP) (IspF). This chain is Bifunctional enzyme IspD/IspF, found in Helicobacter pylori (strain G27).